Reading from the N-terminus, the 179-residue chain is Large ribosomal subunit protein uL6c (179 aa).

Belongs to the universal ribosomal protein uL6 family. In terms of assembly, part of the 50S ribosomal subunit.

It localises to the plastid. The protein localises to the chloroplast. Functionally, binds 23S rRNA. This chain is Large ribosomal subunit protein uL6c (rpl6), found in Trieres chinensis (Marine centric diatom).